A 443-amino-acid chain; its full sequence is Exodeoxyribonuclease 7 large subunit (443 aa).

This sequence belongs to the XseA family. In terms of assembly, heterooligomer composed of large and small subunits.

The protein resides in the cytoplasm. It catalyses the reaction Exonucleolytic cleavage in either 5'- to 3'- or 3'- to 5'-direction to yield nucleoside 5'-phosphates.. Functionally, bidirectionally degrades single-stranded DNA into large acid-insoluble oligonucleotides, which are then degraded further into small acid-soluble oligonucleotides. This chain is Exodeoxyribonuclease 7 large subunit, found in Legionella pneumophila (strain Corby).